The chain runs to 31 residues: Mu-conotoxin SmIIIA (31 aa).

Positions 1-6 are excised as a propeptide; the sequence is PLFDKR. A Pyrrolidone carboxylic acid modification is found at Q7. Disulfide bonds link C9–C21, C10–C27, and C16–C28. At C28 the chain carries Cysteine amide.

The protein belongs to the conotoxin M superfamily. Post-translationally, smIIIA' is a putative isoform where the N-terminal AA is missing. Expressed by the venom duct.

It localises to the secreted. Mu-conotoxins block voltage-gated sodium channels (Nav). This toxin blocks rNav1.5/SCN5A (IC(50) is 1.3 uM), rNav1.6/SCN8A (IC(50) is 160 nM), rNav1.7/SCN9A (IC(50) is 1.3 uM), rNav1.1/SCN1A (K(d) is 3.8 nM), rNav1.2/SCN2A (K(d) is 1.3 nM), rNav1.4/SCN4A (K(d) is 0.22 nM), rNav1.6/SCN8A (K(d) is 69 nM), and rNav1.7/SCN9A (K(d) is 260 nM). This toxin is very potent but weakly discriminating among sodium channels. The block of these channels is modified when beta-subunits are coexpressed with alpha subunits. Hence, blocks of channels containing beta-1 and beta-3 subunits are more potent (compared to channels without beta subunits), whereas blocks of channels containing beta-2 and beta-4 subunits are less potent (compared to channels without beta subunits). The chain is Mu-conotoxin SmIIIA from Conus stercusmuscarum (Fly-specked cone).